The sequence spans 58 residues: COP9 signalosome complex subunit 6b (58 aa).

This sequence belongs to the peptidase M67A family. CSN6 subfamily. Component of the CSN complex, probably composed of CSN1, CSN2, CSN3, CSN4, CSN5 (CSN5A or CSN5B), CSN6 (CSN6A or CSN6B), CSN7 and CSN8.

The protein localises to the cytoplasm. It is found in the nucleus. Functionally, component of the COP9 signalosome complex (CSN), a complex involved in various cellular and developmental processes such as photomorphogenesis and auxin and jasmonate responses. The CSN complex is an essential regulator of the ubiquitin (Ubl) conjugation pathway by mediating the deneddylation of the cullin subunits of SCF-type E3 ligase complexes, leading to decrease the Ubl ligase activity of SCF. It is involved in repression of photomorphogenesis in darkness by regulating the activity of COP1-containing Ubl ligase complexes. This Brassica oleracea (Wild cabbage) protein is COP9 signalosome complex subunit 6b (CSN6B).